The following is a 268-amino-acid chain: 3-methyl-2-oxobutanoate hydroxymethyltransferase (268 aa).

Residues aspartate 44 and aspartate 83 each coordinate Mg(2+). 3-methyl-2-oxobutanoate is bound by residues 44–45 (DS), aspartate 83, and lysine 113. Residue glutamate 115 coordinates Mg(2+). The active-site Proton acceptor is glutamate 183.

It belongs to the PanB family. In terms of assembly, homodecamer; pentamer of dimers. It depends on Mg(2+) as a cofactor.

The protein localises to the cytoplasm. The catalysed reaction is 3-methyl-2-oxobutanoate + (6R)-5,10-methylene-5,6,7,8-tetrahydrofolate + H2O = 2-dehydropantoate + (6S)-5,6,7,8-tetrahydrofolate. Its pathway is cofactor biosynthesis; (R)-pantothenate biosynthesis; (R)-pantoate from 3-methyl-2-oxobutanoate: step 1/2. Catalyzes the reversible reaction in which hydroxymethyl group from 5,10-methylenetetrahydrofolate is transferred onto alpha-ketoisovalerate to form ketopantoate. The chain is 3-methyl-2-oxobutanoate hydroxymethyltransferase from Leptospira biflexa serovar Patoc (strain Patoc 1 / Ames).